Consider the following 753-residue polypeptide: Striatin-4 (753 aa).

The disordered stretch occupies residues 10 to 65 (VAAAASSCRPLGSGAGPGPTGAAPVSAPAPGPGPAGKGGGGGGSPGPTAGPEPLSL). Gly residues predominate over residues 43–54 (PAGKGGGGGGSP). A Phosphoserine modification is found at serine 53. Residues 69–136 (LHFIQHEWAR…QERAKYHKLK (68 aa)) are a coiled coil. A caveolin-binding region spans residues 71 to 79 (FIQHEWARF). The calmodulin-binding stretch occupies residues 165 to 182 (ENSPLVWKEGRQLLRQYL). At serine 206 the chain carries Phosphoserine. Disordered regions lie at residues 213-232 (VEPSEGAPRAPPGPAGLSGG), 271-345 (CEDE…SPHE), and 363-382 (VDGLPPKVTGPPPGTPQPRP). Composition is skewed to acidic residues over residues 271 to 283 (CEDEDSDEDDELD) and 302 to 317 (EMEDEDEEDDSEDAIN). Serine 276 is subject to Phosphoserine. Basic and acidic residues predominate over residues 332 to 345 (PDPRRCTVDGSPHE). Residues 370 to 380 (VTGPPPGTPQP) show a composition bias toward pro residues. 7 WD repeats span residues 436–475 (SHYDGIRSLAFHHSQSALLTASEDGTLKLWNLQKAVTAKK), 489–528 (AHRGPVLAVAMGSNSEYCYSGGADACIHSWKIPDLSMDPY), 542–581 (GHGDAVWGLAFSPTSQRLASCSADGTVRIWDPSSSSPACL), 587–628 (ASEH…ALLT), 635–674 (SGPTQINQVVSHPNQPLTITAHDDRGIRFLDNRTGKPVHS), 677–716 (AHLDAVTCLAVDPNGAFLMSGSHDCSLRLWSLDNKTCVQE), and 723–753 (KHEEAIHAVACHPSKALIASAGADALAKVFV).

This sequence belongs to the WD repeat striatin family. In terms of assembly, part of the core of STRIPAK complexes composed of PP2A catalytic and scaffolding subunits, the striatins (PP2A regulatory subunits), the striatin-associated proteins MOB4, STRIP1 and STRIP2, PDCD10 and members of the STE20 kinases, such as STK24 and STK26. Interacts with CTTNBP2NL.

Its subcellular location is the cytoplasm. In terms of biological role, calmodulin-binding scaffolding protein which is the center of the striatin-interacting phosphatase and kinase (STRIPAK) complexes. STRIPAK complexes have critical roles in protein (de)phosphorylation and are regulators of multiple signaling pathways including Hippo, MAPK, nuclear receptor and cytoskeleton remodeling. Different types of STRIPAK complexes are involved in a variety of biological processes such as cell growth, differentiation, apoptosis, metabolism and immune regulation. Key regulator of the expanded Hippo signaling pathway by interacting and allowing the inhibition of MAP4K kinases by the STRIPAK complex. The polypeptide is Striatin-4 (Homo sapiens (Human)).